We begin with the raw amino-acid sequence, 89 residues long: Small ribosomal subunit protein uS15 (89 aa).

It belongs to the universal ribosomal protein uS15 family. As to quaternary structure, part of the 30S ribosomal subunit. Forms a bridge to the 50S subunit in the 70S ribosome, contacting the 23S rRNA.

Its function is as follows. One of the primary rRNA binding proteins, it binds directly to 16S rRNA where it helps nucleate assembly of the platform of the 30S subunit by binding and bridging several RNA helices of the 16S rRNA. Forms an intersubunit bridge (bridge B4) with the 23S rRNA of the 50S subunit in the ribosome. The chain is Small ribosomal subunit protein uS15 from Ureaplasma parvum serovar 3 (strain ATCC 27815 / 27 / NCTC 11736).